A 227-amino-acid polypeptide reads, in one-letter code: Cytochrome c oxidase subunit 2 (227 aa).

The Mitochondrial intermembrane portion of the chain corresponds to 1 to 14 (MAYPFQLGLQDATS). The helical transmembrane segment at 15-45 (PIMEELTNFHDHTLMIVFLISSLVLYIISLM) threads the bilayer. Over 46 to 59 (LTTKLTHTNTMDAQ) the chain is Mitochondrial matrix. Residues 60-87 (EVETIWTILPAVILILIALPSLRILYMM) traverse the membrane as a helical segment. At 88–227 (DEINNPALTV…HFENWSASMI (140 aa)) the chain is on the mitochondrial intermembrane side. Residues His161, Cys196, Glu198, Cys200, His204, and Met207 each contribute to the Cu cation site. Glu198 is a Mg(2+) binding site.

The protein belongs to the cytochrome c oxidase subunit 2 family. As to quaternary structure, component of the cytochrome c oxidase (complex IV, CIV), a multisubunit enzyme composed of 14 subunits. The complex is composed of a catalytic core of 3 subunits MT-CO1, MT-CO2 and MT-CO3, encoded in the mitochondrial DNA, and 11 supernumerary subunits COX4I, COX5A, COX5B, COX6A, COX6B, COX6C, COX7A, COX7B, COX7C, COX8 and NDUFA4, which are encoded in the nuclear genome. The complex exists as a monomer or a dimer and forms supercomplexes (SCs) in the inner mitochondrial membrane with NADH-ubiquinone oxidoreductase (complex I, CI) and ubiquinol-cytochrome c oxidoreductase (cytochrome b-c1 complex, complex III, CIII), resulting in different assemblies (supercomplex SCI(1)III(2)IV(1) and megacomplex MCI(2)III(2)IV(2)). Found in a complex with TMEM177, COA6, COX18, COX20, SCO1 and SCO2. Interacts with TMEM177 in a COX20-dependent manner. Interacts with COX20. Interacts with COX16. Requires Cu cation as cofactor.

Its subcellular location is the mitochondrion inner membrane. It carries out the reaction 4 Fe(II)-[cytochrome c] + O2 + 8 H(+)(in) = 4 Fe(III)-[cytochrome c] + 2 H2O + 4 H(+)(out). In terms of biological role, component of the cytochrome c oxidase, the last enzyme in the mitochondrial electron transport chain which drives oxidative phosphorylation. The respiratory chain contains 3 multisubunit complexes succinate dehydrogenase (complex II, CII), ubiquinol-cytochrome c oxidoreductase (cytochrome b-c1 complex, complex III, CIII) and cytochrome c oxidase (complex IV, CIV), that cooperate to transfer electrons derived from NADH and succinate to molecular oxygen, creating an electrochemical gradient over the inner membrane that drives transmembrane transport and the ATP synthase. Cytochrome c oxidase is the component of the respiratory chain that catalyzes the reduction of oxygen to water. Electrons originating from reduced cytochrome c in the intermembrane space (IMS) are transferred via the dinuclear copper A center (CU(A)) of subunit 2 and heme A of subunit 1 to the active site in subunit 1, a binuclear center (BNC) formed by heme A3 and copper B (CU(B)). The BNC reduces molecular oxygen to 2 water molecules using 4 electrons from cytochrome c in the IMS and 4 protons from the mitochondrial matrix. The protein is Cytochrome c oxidase subunit 2 (MT-CO2) of Sundamys muelleri (Mueller's giant sunda rat).